We begin with the raw amino-acid sequence, 354 residues long: Long form salivary protein D7L3 (354 aa).

A signal peptide spans 1–26 (MQLTPRSVHLVHLLLAATTLISPSWS).

It belongs to the PBP/GOBP family.

Its subcellular location is the secreted. Functionally, modulates blood feeding of female mosquitoes on vertebrate species by binding and sequestering different mediators involved in the host response. Binds serotonin with high affinity. Binds weakly noradrenaline and histamine. Does not bind tryptamine, octopamine, dopamine, adrenaline, leukotriene C4, leukotriene D4, leukotriene B4, ADP and U-46619, a stable analog of thromboxane A2. Inhibits agonist-induced platelet aggregation. Exhibits vasodilating activity. In Anopheles gambiae (African malaria mosquito), this protein is Long form salivary protein D7L3.